The primary structure comprises 236 residues: Uridylate kinase (236 aa).

10 to 11 (GS) lines the ATP pocket. Residue glycine 44 participates in UMP binding. The ATP site is built by glycine 45 and arginine 49. Residues aspartate 66 and 114–120 (ITPGQTT) each bind UMP. Residues threonine 140, tyrosine 146, and aspartate 149 each contribute to the ATP site.

Belongs to the UMP kinase family. Homohexamer.

The protein localises to the cytoplasm. It catalyses the reaction UMP + ATP = UDP + ADP. It functions in the pathway pyrimidine metabolism; CTP biosynthesis via de novo pathway; UDP from UMP (UMPK route): step 1/1. Inhibited by UTP. In terms of biological role, catalyzes the reversible phosphorylation of UMP to UDP. This Methanospirillum hungatei JF-1 (strain ATCC 27890 / DSM 864 / NBRC 100397 / JF-1) protein is Uridylate kinase.